A 208-amino-acid polypeptide reads, in one-letter code: RxLR effector protein Avr1 (208 aa).

Residues M1–A22 form the signal peptide. The RxLR-dEER signature appears at R41–R54. The W1-motif stretch occupies residues K70 to R92. A linker region ln1 region spans residues L93–F110. A W2-motif region spans residues K111 to F136. A Y-motif region spans residues D137–K157. The interval K158–L170 is linker region ln2. A T-region region spans residues L170 to F208.

It belongs to the RxLR effector family. In terms of assembly, interacts with host exocyst component Sec5.

The protein localises to the secreted. The protein resides in the host cytoplasm. Its subcellular location is the host nucleus. It localises to the host peroxisome. Its function is as follows. Secreted effector that acts as an elicitor of hypersensitive response (HR) specifically on plants carrying defense protein R1, through its interaction with this protein. Also acts as a virulence factor that promotes colonization and suppresses cell death induced by CRN2 as well as callose deposition, a hallmark of basal defense. Interacts with host exocyst component Sec5 and thereby disturbs vesicle trafficking, a cellular process that is important for basal defense. By targeting and stabilizing Sec5 in the cytoplasm, the exocyst complex is thus out of balance and not able to mediate the focal secretion of PR-1 and callose. The polypeptide is RxLR effector protein Avr1 (Phytophthora infestans (strain T30-4) (Potato late blight agent)).